Here is a 273-residue protein sequence, read N- to C-terminus: WIMGHMVNAIAQIDEFVNLGANSIETDVSFDSSDNPEYTYHGIPCDCGRTCTKWEHFNEFLKGLRKATTPGDSKYHEKLVLVVFDLKTGSLYDNQASDAGKKLAKSLLQNYWNNGNNGGRAYIVLSIPNLAHYKLITGFKEALTSEGHPELMDKVGYDFSGNDDIGDVANAYKKAGVTGHVWQSDGITNCLLRGLDRVRKAVANRDSSNGYINKVYYWTVDKRQSTRDALDAGVDGIMTNYPDVIADVLNESAYKAKFRIASYDDNPWETFKN.

Histidine 5 is a catalytic residue. Mg(2+) contacts are provided by glutamate 25 and aspartate 27. Histidine 41 functions as the Nucleophile in the catalytic mechanism. 2 disulfide bridges follow: cysteine 45–cysteine 51 and cysteine 47–cysteine 190. Position 85 (aspartate 85) interacts with Mg(2+). An N-linked (GlcNAc...) asparagine glycan is attached at asparagine 250.

This sequence belongs to the arthropod phospholipase D family. Class II subfamily. It depends on Mg(2+) as a cofactor. As to expression, expressed by the venom gland.

Its subcellular location is the secreted. The catalysed reaction is an N-(acyl)-sphingosylphosphocholine = an N-(acyl)-sphingosyl-1,3-cyclic phosphate + choline. The enzyme catalyses an N-(acyl)-sphingosylphosphoethanolamine = an N-(acyl)-sphingosyl-1,3-cyclic phosphate + ethanolamine. It catalyses the reaction a 1-acyl-sn-glycero-3-phosphocholine = a 1-acyl-sn-glycero-2,3-cyclic phosphate + choline. It carries out the reaction a 1-acyl-sn-glycero-3-phosphoethanolamine = a 1-acyl-sn-glycero-2,3-cyclic phosphate + ethanolamine. Dermonecrotic toxins cleave the phosphodiester linkage between the phosphate and headgroup of certain phospholipids (sphingolipid and lysolipid substrates), forming an alcohol (often choline) and a cyclic phosphate. This toxin acts on sphingomyelin (SM). It may also act on ceramide phosphoethanolamine (CPE), lysophosphatidylcholine (LPC) and lysophosphatidylethanolamine (LPE), but not on lysophosphatidylserine (LPS), and lysophosphatidylglycerol (LPG). It acts by transphosphatidylation, releasing exclusively cyclic phosphate products as second products. Induces dermonecrosis, hemolysis, increased vascular permeability, edema, inflammatory response, and platelet aggregation. This Loxosceles arizonica (Arizona brown spider) protein is Dermonecrotic toxin LarSicTox-alphaIB1b.